A 351-amino-acid polypeptide reads, in one-letter code: Biotin synthase (351 aa).

Residues 44–262 (NRVQVSTLLS…LAVARIMMPK (219 aa)) enclose the Radical SAM core domain. [4Fe-4S] cluster contacts are provided by C59, C63, and C66. 4 residues coordinate [2Fe-2S] cluster: C103, C134, C194, and R266.

The protein belongs to the radical SAM superfamily. Biotin synthase family. As to quaternary structure, homodimer. It depends on [4Fe-4S] cluster as a cofactor. [2Fe-2S] cluster serves as cofactor.

The catalysed reaction is (4R,5S)-dethiobiotin + (sulfur carrier)-SH + 2 reduced [2Fe-2S]-[ferredoxin] + 2 S-adenosyl-L-methionine = (sulfur carrier)-H + biotin + 2 5'-deoxyadenosine + 2 L-methionine + 2 oxidized [2Fe-2S]-[ferredoxin]. Its pathway is cofactor biosynthesis; biotin biosynthesis; biotin from 7,8-diaminononanoate: step 2/2. Its function is as follows. Catalyzes the conversion of dethiobiotin (DTB) to biotin by the insertion of a sulfur atom into dethiobiotin via a radical-based mechanism. The protein is Biotin synthase of Stutzerimonas stutzeri (strain A1501) (Pseudomonas stutzeri).